We begin with the raw amino-acid sequence, 247 residues long: ATP synthase subunit a, chloroplastic (247 aa).

5 helical membrane passes run 38-58, 95-115, 134-154, 199-219, and 220-240; these read QVLITSWVVIAILLGSATLAV, VPFIGTMFLFIFVSNWSGALL, INTTVALALLTSVAYFYAGLT, LVVVVLVSLVPSIVPIPVMFL, and GLFTSGIQALIFATLAAAYIG.

It belongs to the ATPase A chain family. In terms of assembly, F-type ATPases have 2 components, CF(1) - the catalytic core - and CF(0) - the membrane proton channel. CF(1) has five subunits: alpha(3), beta(3), gamma(1), delta(1), epsilon(1). CF(0) has four main subunits: a, b, b' and c.

Its subcellular location is the plastid. The protein localises to the chloroplast thylakoid membrane. Functionally, key component of the proton channel; it plays a direct role in the translocation of protons across the membrane. In Vitis vinifera (Grape), this protein is ATP synthase subunit a, chloroplastic.